The primary structure comprises 765 residues: Proton-coupled zinc antiporter SLC30A5 (765 aa).

M1 is subject to N-acetylmethionine. Over 1-32 (MEEKYGGDVLAGPGGGGGLGPVDVPSARLTKY) the chain is Cytoplasmic. The helical transmembrane segment at 33–53 (IVLLCFTKFLKAVGLFESYDL) threads the bilayer. The Lumenal segment spans residues 54–56 (LKA). A helical membrane pass occupies residues 57–77 (VHIVQFIFILKLGTAFFMVLF). The Cytoplasmic portion of the chain corresponds to 78-98 (QKPFSSGKTITKHQWIKIFKH). A helical transmembrane segment spans residues 99-119 (AVAGCIISLLWFFGLTLCGPL). Position 120 (R120) is a topological domain, lumenal. A helical membrane pass occupies residues 121–141 (TLLLFEHSDIVVISLLSVLFT). Topologically, residues 142 to 152 (SSGGGPAKTRG) are cytoplasmic. The helical transmembrane segment at 153 to 173 (AAFFIIAVICLLLFDNDDLMA) threads the bilayer. At 174–193 (KMAEHPEGHHDSALTHMLYT) the chain is on the lumenal side. Residues 194 to 214 (AIAFLGVADHKGGVLLLVLAL) form a helical membrane-spanning segment. Over 215-238 (CCKVGFHTASRKLSVDVGGAKRLQ) the chain is Cytoplasmic. Residues 239–259 (ALSHLVSVLLLCPWVIVLSVT) form a helical membrane-spanning segment. Over 260-267 (TESKVESW) the chain is Lumenal. Residues 268 to 288 (FSLIMPFATVIFFVMILDFYV) traverse the membrane as a helical segment. Over 289–303 (DSICSVKMEVSKCAR) the chain is Cytoplasmic. Residues 304–324 (YGSFPIFISALLFGNFWTHPI) traverse the membrane as a helical segment. Topologically, residues 325-342 (TDQLRAMNKAAHQESTEH) are lumenal. A helical transmembrane segment spans residues 343–363 (VLSGGVVVSAIFFILSANILS). Over 364 to 418 (SPSKRGQKGTLIGYSPEGTPLYNFMGDAFQHSSQSIPRFIKESLKQILEESDSRQ) the chain is Cytoplasmic. The chain crosses the membrane as a helical span at residues 419 to 439 (IFYFLCLNLLFTFVELFYGVL). Residues 420–640 (FYFLCLNLLF…ILIFLSVVPL (221 aa)) are mediates homodimerization with SLC30A6. Residues 440 to 448 (TNSLGLISD) are Lumenal-facing. A helical transmembrane segment spans residues 449-469 (GFHMLFDCSALVMGLFAALMS). 2 residues coordinate Zn(2+): H451 and D455. The Cytoplasmic portion of the chain corresponds to 470-483 (RWKATRIFSYGYGR). Residues 484 to 504 (IEILSGFINGLFLIVIAFFVF) traverse the membrane as a helical segment. Over 505 to 520 (MESVARLIDPPELDTH) the chain is Lumenal. The chain crosses the membrane as a helical span at residues 521–541 (MLTPVSVGGLIVNLIGICAFS). The tract at residues 542 to 578 (HAHSHAHGASQGSCHSSDHSHSHHMHGHSDHGHGHSH) is his-rich loop; required for zinc transport. Residues 542–592 (HAHSHAHGASQGSCHSSDHSHSHHMHGHSDHGHGHSHGSAGGGMNANMRGV) are Cytoplasmic-facing. Residues 551–581 (SQGSCHSSDHSHSHHMHGHSDHGHGHSHGSA) form a disordered region. Residues 593–613 (FLHVLADTLGSIGVIVSTVLI) traverse the membrane as a helical segment. Zn(2+) is bound by residues H595 and D599. Over 614-617 (EQFG) the chain is Lumenal. Residues 618 to 638 (WFIADPLCSLFIAILIFLSVV) form a helical membrane-spanning segment. Residues 639–765 (PLIKDACQVL…KYCKDGTYIM (127 aa)) lie on the Cytoplasmic side of the membrane.

Belongs to the cation diffusion facilitator (CDF) transporter (TC 2.A.4) family. SLC30A subfamily. In terms of assembly, heterodimer with SLC30A6/ZNT6; form a functional zinc ion transmembrane transporter. Post-translationally, could homodimerize through the formation of dityrosine bonds upon oxidative stress. In terms of tissue distribution, ubiquitously expressed. Highly expressed in pancreas, liver and kidney. Expressed abundantly in insulin-containing beta cells, undetectable in other endocrine cell types including glucagon-secreting alpha cells and most acinar cells (at protein level).

The protein resides in the golgi apparatus. It is found in the golgi stack membrane. It localises to the cytoplasmic vesicle. Its subcellular location is the COPII-coated vesicle membrane. The protein localises to the secretory vesicle membrane. The protein resides in the trans-Golgi network membrane. It is found in the endoplasmic reticulum membrane. It localises to the cell membrane. Its subcellular location is the apical cell membrane. The catalysed reaction is Zn(2+)(in) + 2 H(+)(out) = Zn(2+)(out) + 2 H(+)(in). Its function is as follows. Together with SLC30A6 forms a functional proton-coupled zinc ion antiporter mediating zinc entry into the lumen of organelles along the secretory pathway. By contributing to zinc ion homeostasis within the early secretory pathway, regulates the activation and folding of enzymes like alkaline phosphatases and enzymes involved in phosphatidylinositol glycan anchor biosynthesis. Through the transport of zinc into secretory granules of pancreatic beta-cells, plays an important role in the storage and secretion of insulin. In terms of biological role, zinc ion:proton antiporter mediating influx and efflux of zinc at the plasma membrane. The sequence is that of Proton-coupled zinc antiporter SLC30A5 from Homo sapiens (Human).